Consider the following 113-residue polypeptide: MARRGGFPGGMPGNMNNLMKQAQKMQRQMEEAQKQLEDAEVTAKAGGGAVEVTVSGKKEITKVKLSEEVVDPDDIEMLEDLIMAATNEALRQIDEQSQASMSKITGGLGGGLF.

The segment covering 1–12 (MARRGGFPGGMP) has biased composition (gly residues). The interval 1–45 (MARRGGFPGGMPGNMNNLMKQAQKMQRQMEEAQKQLEDAEVTAKA) is disordered. Over residues 27–37 (RQMEEAQKQLE) the composition is skewed to basic and acidic residues.

It belongs to the YbaB/EbfC family. As to quaternary structure, homodimer.

Its subcellular location is the cytoplasm. The protein resides in the nucleoid. Binds to DNA and alters its conformation. May be involved in regulation of gene expression, nucleoid organization and DNA protection. In Agathobacter rectalis (strain ATCC 33656 / DSM 3377 / JCM 17463 / KCTC 5835 / VPI 0990) (Eubacterium rectale), this protein is Nucleoid-associated protein EUBREC_0329.